Consider the following 504-residue polypeptide: Probable cytosol aminopeptidase (504 aa).

Mn(2+) is bound by residues Lys263 and Asp268. The active site involves Lys275. Mn(2+) is bound by residues Asp286, Asp345, and Glu347. Residue Arg349 is part of the active site.

Belongs to the peptidase M17 family. Requires Mn(2+) as cofactor.

The protein localises to the cytoplasm. It carries out the reaction Release of an N-terminal amino acid, Xaa-|-Yaa-, in which Xaa is preferably Leu, but may be other amino acids including Pro although not Arg or Lys, and Yaa may be Pro. Amino acid amides and methyl esters are also readily hydrolyzed, but rates on arylamides are exceedingly low.. The enzyme catalyses Release of an N-terminal amino acid, preferentially leucine, but not glutamic or aspartic acids.. Presumably involved in the processing and regular turnover of intracellular proteins. Catalyzes the removal of unsubstituted N-terminal amino acids from various peptides. The chain is Probable cytosol aminopeptidase from Sulfurihydrogenibium sp. (strain YO3AOP1).